An 89-amino-acid chain; its full sequence is Small ribosomal subunit protein uS19 (89 aa).

The protein belongs to the universal ribosomal protein uS19 family.

Protein S19 forms a complex with S13 that binds strongly to the 16S ribosomal RNA. This chain is Small ribosomal subunit protein uS19, found in Bacteroides thetaiotaomicron (strain ATCC 29148 / DSM 2079 / JCM 5827 / CCUG 10774 / NCTC 10582 / VPI-5482 / E50).